Reading from the N-terminus, the 475-residue chain is Glycogen synthase (475 aa).

An ADP-alpha-D-glucose-binding site is contributed by K15.

It belongs to the glycosyltransferase 1 family. Bacterial/plant glycogen synthase subfamily.

The enzyme catalyses [(1-&gt;4)-alpha-D-glucosyl](n) + ADP-alpha-D-glucose = [(1-&gt;4)-alpha-D-glucosyl](n+1) + ADP + H(+). The protein operates within glycan biosynthesis; glycogen biosynthesis. In terms of biological role, synthesizes alpha-1,4-glucan chains using ADP-glucose. This is Glycogen synthase from Kosmotoga olearia (strain ATCC BAA-1733 / DSM 21960 / TBF 19.5.1).